Here is an 861-residue protein sequence, read N- to C-terminus: Nuclear pore complex protein NUP93A (861 aa).

The protein belongs to the nucleoporin interacting component (NIC) family. In terms of assembly, part of the nuclear pore complex (NPC). The NPC has an eight-fold symmetrical structure comprising a central transport channel and two rings, the cytoplasmic and nuclear rings, to which eight filaments are attached. The cytoplasmic filaments have loose ends, while the nuclear filaments are joined in a distal ring, forming a nuclear basket. NPCs are highly dynamic in configuration and composition, and can be devided in 3 subcomplexes, the NUP62 subcomplex, the NUP107-160 subcomplex and the NUP93 subcomplex, containing approximately 30 different nucleoporin proteins.

It localises to the nucleus envelope. Its subcellular location is the nucleus. The protein resides in the nuclear pore complex. The sequence is that of Nuclear pore complex protein NUP93A from Arabidopsis thaliana (Mouse-ear cress).